The following is a 478-amino-acid chain: Chromosomal replication initiator protein DnaA (478 aa).

Positions 1-90 (MSVELWQQCV…KRSSAPRAVQ (90 aa)) are domain I, interacts with DnaA modulators. A domain II region spans residues 91 to 141 (PASPPPAVVQAAPVAIEEASAARTVDAQPVAPATVRTERSVQVEGGLKHTS). The tract at residues 142–358 (YLNRAFTFEN…GALKRVIAHS (217 aa)) is domain III, AAA+ region. ATP-binding residues include glycine 186, glycine 188, lysine 189, and threonine 190. The interval 359-478 (HFTNHPITIE…YKNLLRTLTT (120 aa)) is domain IV, binds dsDNA.

Belongs to the DnaA family. Oligomerizes as a right-handed, spiral filament on DNA at oriC.

The protein localises to the cytoplasm. In terms of biological role, plays an essential role in the initiation and regulation of chromosomal replication. ATP-DnaA binds to the origin of replication (oriC) to initiate formation of the DNA replication initiation complex once per cell cycle. Binds the DnaA box (a 9 base pair repeat at the origin) and separates the double-stranded (ds)DNA. Forms a right-handed helical filament on oriC DNA; dsDNA binds to the exterior of the filament while single-stranded (ss)DNA is stabiized in the filament's interior. The ATP-DnaA-oriC complex binds and stabilizes one strand of the AT-rich DNA unwinding element (DUE), permitting loading of DNA polymerase. After initiation quickly degrades to an ADP-DnaA complex that is not apt for DNA replication. Binds acidic phospholipids. The chain is Chromosomal replication initiator protein DnaA from Azotobacter vinelandii (strain DJ / ATCC BAA-1303).